A 247-amino-acid polypeptide reads, in one-letter code: LHFPL tetraspan subfamily member 4 protein (247 aa).

Helical transmembrane passes span 22 to 42, 97 to 117, 127 to 147, and 178 to 198; these read IGVL…VVFI, FFVL…ALFF, ICAW…MIFP, and ILAI…FVLG.

Belongs to the LHFP family. As to quaternary structure, interacts with GABA(A) receptor subunits. Interacts with GABRB3. Interacts with GABRA2. Interacts with GABRG2. Identified in a complex of 720 kDa composed of LHFPL4, NLGN2, GABRA1, GABRB2, GABRG2 and GABRB3. Interacts with GABRA1. Interacts with NLGN2; leading to mutual regulation of protein level and synaptic clustering.

The protein localises to the cell projection. It is found in the dendrite. Its subcellular location is the postsynaptic cell membrane. In terms of biological role, plays a role in the regulation of inhibitory synapse formation and function by being involved in maintening gamma-aminobutyric acid receptors (GABAARs) clustering and their associated scaffold proteins at inhibitory synaptic sites. Acts in concert with NLGN2 to recruit or stabilize GABAARs. The protein is LHFPL tetraspan subfamily member 4 protein of Bos taurus (Bovine).